A 291-amino-acid polypeptide reads, in one-letter code: ATP synthase gamma chain (291 aa).

Belongs to the ATPase gamma chain family. F-type ATPases have 2 components, CF(1) - the catalytic core - and CF(0) - the membrane proton channel. CF(1) has five subunits: alpha(3), beta(3), gamma(1), delta(1), epsilon(1). CF(0) has three main subunits: a, b and c.

It is found in the cell membrane. Produces ATP from ADP in the presence of a proton gradient across the membrane. The gamma chain is believed to be important in regulating ATPase activity and the flow of protons through the CF(0) complex. The chain is ATP synthase gamma chain from Buchnera aphidicola subsp. Schizaphis graminum (strain Sg).